Reading from the N-terminus, the 1347-residue chain is MDLLSGTYIFAVLLACVVFHSGAQEKNYTIREEMPENVLIGDLLKDLNLSLIPNKSLTTAMQFKLVYKTGDVPLTRIEEDTGEIFTTGARIDREKLCAGIPRDEHCFYEVEVAILPDEIFRLVKIRFLIEDINDNAPLFPATVINISIPENSAINSKYTLPAAVDPDVGINGVQNYELIKSQNIFGLDVIETPEGDKMPQLIVQKELDREEKDTYVMKVKVEDGGFPQRSSTAILQVSVTDTNDNHPVFKETEIEVSIPENAPVGTSVTQLHATDADIGENAKIHFSFSNLVSNIARRLFHLNATTGLITIKEPLDREETPNHKLLVLASDGGLMPARAMVLVNVTDVNDNVPSIDIRYIVNPINDTVVLSENIPLNTKIALITVTDKDADHNGRVTCFTDHEIPFRLRPVFSNQFLLETAAYLDYESTKEYAIKLLAADAGKPPLNQSAMLFIKVKDENDNAPVFTQSFVTVSIPENNSPGIQLTKVSATDADSGPNAEINYLLGPDAPPEFSLDRRTGMLTVVKKLDREKEDKYLFTILAKDNGVPPLTSNVTVFVSIIDQNDNSPVFTHNEYNFYVPENLPRHGTVGLITVTDPDYGDNSAVTLSILDENDDFTIDSQTGVIRPNISFDREKQESYTFYVKAEDGGRVSRSSSAKVTINVVDVNDNKPVFIVPPSNYSYELVLPSTNPGTVVFQVIAVDNDTGMNAEVRYSIVGGNTRDLFAIDQETGNITLMEKCDVTDLGLHRVLVKANDLGQPDSLFSVVIVNLFVNESVTNATLINELVRKSIEAPVTPNTEIADVSSPTSDYVKILVAAVAGTVTVVVVIFITAVVRCRQAPHLKAAQKNKQNSEWATPNPENRQMIMMKKKKKKKKHSPKNLLLNFVTIEETKADDVDSDGNRITLDLPIDLEEQTMGKYNWVTTPTTFKPDSPDLARHYKSASPQPAFQIQPETPLNSKHHIIQELPLDNTFVACDSISKRSSSSSDPYSVSDCGYPVTTFEVPVSVHTRPPMKEVVRSCTPMKESTTMEIWIHPQPQRKSEGKGAGKSQRRVTFHLPEGSQESSSDGGLGEHDAGSLTSTSHGLPLGYPQEEYFDRATPSNRTEGDGNSDPESTFIPGLKKAAEITVQPTVEEASDNCTQECLIYGHSDACWMPASLDHSSSSQAQASALCHSPPLSQASTQHHSPPVTQTIALCHSPPVTQTIALCHSPPPIQVSALHHSPPLVQATALRHSPPSAQASALCYSPPLAQAAAISHSSPLPQVIALHRSQAQSSVSLQQGWVQGAEGLCSVDQGVQGSATSQFYTMSERLHPSDDSIKVIPLTTFTPRQQARPSRGDSPIMEEHPL.

A signal peptide spans 1–23 (MDLLSGTYIFAVLLACVVFHSGA). At 24–812 (QEKNYTIREE…VSSPTSDYVK (789 aa)) the chain is on the extracellular side. 7 Cadherin domains span residues 26-139 (KNYT…APLF), 140-249 (PATV…HPVF), 250-355 (KETE…VPSI), 362-466 (NPIN…APVF), 467-570 (TQSF…SPVF), 571-673 (THNE…KPVF), and 677-795 (PSNY…APVT). Residues Asn-27, Asn-48, and Asn-54 are each glycosylated (N-linked (GlcNAc...) asparagine). The N-linked (GlcNAc...) asparagine glycan is linked to Asn-344. N-linked (GlcNAc...) asparagine glycosylation occurs at Asn-553. Asn-773 is a glycosylation site (N-linked (GlcNAc...) asparagine). A helical transmembrane segment spans residues 813–833 (ILVAAVAGTVTVVVVIFITAV). At 834 to 1347 (VRCRQAPHLK…DSPIMEEHPL (514 aa)) the chain is on the cytoplasmic side. Disordered regions lie at residues 1031-1050 (IWIH…GKSQ), 1057-1091 (LPEG…GYPQ), 1097-1116 (RATP…ESTF), and 1325-1347 (TFTP…EHPL).

The protein resides in the cell membrane. Its function is as follows. Potential calcium-dependent cell-adhesion protein. The protein is Protocadherin-11 X-linked (PCDH11X) of Pongo pygmaeus (Bornean orangutan).